The chain runs to 834 residues: Periplasmic nitrate reductase (834 aa).

A signal peptide (tat-type signal) is located at residues 1-31 (MSSELTRRNLLKAHAAGIAAATAGIALPAAA). Residues 43-99 (IKWSKAPCRFCGTGCGVMVGVKEGKVVATHGDMQAEVNRGLNCIKGYFLSKIMYGKD) form the 4Fe-4S Mo/W bis-MGD-type domain. Cys-50, Cys-53, Cys-57, and Cys-85 together coordinate [4Fe-4S] cluster. Mo-bis(molybdopterin guanine dinucleotide)-binding positions include Lys-87, Gln-154, Asn-179, Cys-183, 216 to 223 (WGSNMAEM), 247 to 251 (STFTH), 266 to 268 (GTD), Met-377, Gln-381, Asn-487, 513 to 514 (SD), Lys-536, Asp-563, and 723 to 732 (TGRVLEHWHS). Trp-799 is a substrate binding site. Residues Asn-807 and Lys-824 each coordinate Mo-bis(molybdopterin guanine dinucleotide).

This sequence belongs to the prokaryotic molybdopterin-containing oxidoreductase family. NasA/NapA/NarB subfamily. In terms of assembly, component of the periplasmic nitrate reductase NapAB complex composed of NapA and NapB. [4Fe-4S] cluster serves as cofactor. Mo-bis(molybdopterin guanine dinucleotide) is required as a cofactor. In terms of processing, predicted to be exported by the Tat system. The position of the signal peptide cleavage has not been experimentally proven.

Its subcellular location is the periplasm. It catalyses the reaction 2 Fe(II)-[cytochrome] + nitrate + 2 H(+) = 2 Fe(III)-[cytochrome] + nitrite + H2O. Catalytic subunit of the periplasmic nitrate reductase complex NapAB. Receives electrons from NapB and catalyzes the reduction of nitrate to nitrite. The chain is Periplasmic nitrate reductase from Agrobacterium fabrum (strain C58 / ATCC 33970) (Agrobacterium tumefaciens (strain C58)).